A 454-amino-acid chain; its full sequence is Inner membrane transport protein YajR (454 aa).

Residues 1 to 14 lie on the Periplasmic side of the membrane; it reads MNDYKMTPGERRAT. The helical transmembrane segment at 15 to 35 threads the bilayer; that stretch reads WGLGTVFSLRMLGMFMVLPVL. Over 36–47 the chain is Cytoplasmic; that stretch reads TTYGMALQGASE. A helical transmembrane segment spans residues 48-68; it reads ALIGIAIGIYGLTQAVFQIPF. At 69 to 84 the chain is on the periplasmic side; it reads GLLSDRIGRKPLIVGG. Residues 85 to 105 form a helical membrane-spanning segment; it reads LAVFAAGSVIAALSDSIWGII. The Cytoplasmic portion of the chain corresponds to 106-137; that stretch reads LGRALQGSGAIAAAVMALLSDLTREQNRTKAM. A helical transmembrane segment spans residues 138–158; sequence AFIGVSFGITFAIAMVLGPII. Residues 159–165 lie on the Periplasmic side of the membrane; the sequence is THKLGLH. Residues 166–186 traverse the membrane as a helical segment; that stretch reads ALFWMIAILATTGIALTIWVV. Topologically, residues 187–216 are cytoplasmic; it reads PNSSTHVLNRESGMVKGSFSKVLAEPRLLK. The chain crosses the membrane as a helical span at residues 217–237; the sequence is LNFGIMCLHILLMSTFVALPG. Over 238 to 252 the chain is Periplasmic; sequence QLADAGFPAAEHWKV. The chain crosses the membrane as a helical span at residues 253 to 273; sequence YLATMLIAFGSVVPFIIYAEV. Over 274 to 279 the chain is Cytoplasmic; it reads KRKMKQ. A helical transmembrane segment spans residues 280-300; that stretch reads VFVFCVGLIVVAEIVLWNAQT. The Periplasmic segment spans residues 301–306; sequence QFWQLV. A helical transmembrane segment spans residues 307–327; the sequence is VGVQLFFVAFNLMEALLPSLI. Topologically, residues 328–340 are cytoplasmic; that stretch reads SKESPAGYKGTAM. The helical transmembrane segment at 341 to 361 threads the bilayer; it reads GVYSTSQFLGVAIGGSLGGWI. Topologically, residues 362–363 are periplasmic; sequence NG. The chain crosses the membrane as a helical span at residues 364–384; the sequence is MFDGQGVFLAGAMLAAVWLTV. At 385 to 454 the chain is on the cytoplasmic side; it reads ASTMKEPPYV…FEIEQAIRQA (70 aa).

Belongs to the major facilitator superfamily.

The protein resides in the cell inner membrane. This is Inner membrane transport protein YajR (yajR) from Escherichia coli (strain K12).